A 342-amino-acid chain; its full sequence is MSLITSTSPHATVKNNTGAFMRQVIYATLPGLAVLTWQFGWGSVINVLWAVIVALVSEALFLKARGRNIAFYLKDYSAVVTAVLLGLALPPTAPWWLTLVGVSFAIIVAKQLYGGLGMNPFNPAMVGYVLLLISFPVAMTQWLAPGEPLSLLQSWQLFTGQLPVDGLSGATPLDTFRTVHSAGASSEIELASHSILHGQFAGLGWEWVNLAFLLGGLYLISRKIITWHIPAGFLAGLGLPALLAWLIDPVRFADPLFQLFSGGAMLGAFFIATDPVSAATSRMGRLVYALLIGVLIWVIRTFGGYPDAVAFSVLLLNLSAPFIDYYTQPRTYGHKSSNRGTN.

The next 3 helical transmembrane spans lie at 42–62 (GSVI…ALFL), 68–90 (NIAF…LALP), and 124–144 (AMVG…QWLA). The residue at position 171 (Thr-171) is an FMN phosphoryl threonine. 5 helical membrane passes run 200 to 220 (FAGL…LYLI), 227 to 247 (WHIP…AWLI), 252 to 272 (FADP…FFIA), 286 to 306 (LVYA…GGYP), and 308 to 328 (AVAF…YYTQ).

This sequence belongs to the NqrB/RnfD family. The complex is composed of six subunits: RnfA, RnfB, RnfC, RnfD, RnfE and RnfG. FMN serves as cofactor.

It localises to the cell inner membrane. Part of a membrane-bound complex that couples electron transfer with translocation of ions across the membrane. This Alcanivorax borkumensis (strain ATCC 700651 / DSM 11573 / NCIMB 13689 / SK2) protein is Ion-translocating oxidoreductase complex subunit D.